Here is a 998-residue protein sequence, read N- to C-terminus: Methyl sulfide methyltransferase-associated sensor (998 aa).

The PAS 1 domain occupies 40 to 77 (FGYSPKDFISGGLGYADIIYPADLEIAVSQFFSYVEKD). A PAC 1 domain is found at 117–169 (FTQQYRLLNKSGDVLWVEAEIKVLEEEEGKAGLFQVTVFDISRWKHTEKAMPA). The region spanning 209–246 (LGYTPEDFTSGRIVYTDIIHPDDLDNVRAEVSKNTEEG) is the PAS 2 domain. The PAC 2 domain occupies 250-302 (FSKEYRVLAKSGEVRYVDERTLIRRNEKGEITCYQGILLDITQRKEAEELILS). The 145-residue stretch at 314–458 (ASLDEVLLLL…NAYLAGIAIE (145 aa)) folds into the GAF 1 domain. The region spanning 469-540 (SENRFRTIFD…ENMQKIKAEG (72 aa)) is the PAS 3 domain. The 144-residue stretch at 609–752 (ASLKEITDFA…LMQGMWQLIQ (144 aa)) folds into the GAF 2 domain. Position 656 (cysteine 656) interacts with heme. Residues 783–998 (EFVEEMMFPE…GNLMHVKLPK (216 aa)) form the Histidine kinase domain.

Requires heme as cofactor. Autophosphorylates: autophosphorylation is dependent on the redox state of heme cofactor and is promoted upon reduction.

The protein localises to the cytoplasm. The enzyme catalyses ATP + protein L-histidine = ADP + protein N-phospho-L-histidine.. In terms of biological role, heme-binding sensor kinase component part of a two-component regulatory system involved in methyl sulfide metabolism. Does not act as a phytochrome-like photoreceptor. The chain is Methyl sulfide methyltransferase-associated sensor (msmS) from Methanosarcina acetivorans (strain ATCC 35395 / DSM 2834 / JCM 12185 / C2A).